The following is a 544-amino-acid chain: Chaperonin GroEL 1 (544 aa).

ATP is bound by residues 30 to 33, 87 to 91, G415, 480 to 482, and D496; these read TLGP, DGTTT, and NAA.

Belongs to the chaperonin (HSP60) family. As to quaternary structure, forms a cylinder of 14 subunits composed of two heptameric rings stacked back-to-back. Interacts with the co-chaperonin GroES.

Its subcellular location is the cytoplasm. The enzyme catalyses ATP + H2O + a folded polypeptide = ADP + phosphate + an unfolded polypeptide.. Its function is as follows. Together with its co-chaperonin GroES, plays an essential role in assisting protein folding. The GroEL-GroES system forms a nano-cage that allows encapsulation of the non-native substrate proteins and provides a physical environment optimized to promote and accelerate protein folding. This is Chaperonin GroEL 1 from Polaromonas naphthalenivorans (strain CJ2).